A 356-amino-acid polypeptide reads, in one-letter code: Leucine-rich repeat and transmembrane domain-containing protein 1 (356 aa).

The first 32 residues, 1-32 (MLNEGLCCGAWAMKGTLLLVSSVGLLLPGVGS), serve as a signal peptide directing secretion. The 30-residue stretch at 33–62 (CPMKCLCHPSSNSVDCSGQGLSKVPRDLPP) folds into the LRRNT domain. Residues 33 to 299 (CPMKCLCHPS…PTNLRHAVAT (267 aa)) are Extracellular-facing. 5 LRR repeats span residues 63 to 84 (WTVT…AFQS), 87 to 108 (LLST…AFYG), 111 to 132 (HLRV…FAHA), 135 to 156 (GLRE…LGKP), and 159 to 180 (NLTV…LLEA). N-linked (GlcNAc...) asparagine glycans are attached at residues asparagine 92 and asparagine 116. Asparagine 159 carries N-linked (GlcNAc...) asparagine glycosylation. One can recognise an LRRCT domain in the interval 192-246 (NPWICDCHLLGLKLWLERFTFQGGETDGAICRLPEPWQGKALLSIPHELYQPCSL). A compositionally biased stretch (polar residues) spans 255 to 277 (LVQQPGSAPQDAQKSHENSSGQQ). A disordered region spans residues 255–288 (LVQQPGSAPQDAQKSHENSSGQQDPLECEAKPKP). The helical transmembrane segment at 300–320 (VVITGVVCGIVCLMMLAAAIY) threads the bilayer. Over 321–356 (GCTYAAITAQYQGRPLASARKSEKMGSKELMDSSSA) the chain is Cytoplasmic.

Its subcellular location is the membrane. In Mus musculus (Mouse), this protein is Leucine-rich repeat and transmembrane domain-containing protein 1 (Lrtm1).